The sequence spans 324 residues: 2-oxoisovalerate dehydrogenase subunit beta (324 aa).

Residues Glu29, 58-60, Gln82, and 86-89 contribute to the thiamine diphosphate site; these read LSE and YIFP. Substrate-binding positions include 83-86 and His129; that span reads FADY. Catalysis depends on His129, which acts as the Proton acceptor.

Heterotetramer of two alpha and two beta chains. Directly associated with ODBA in the E1 complex. The cofactor is thiamine diphosphate.

The catalysed reaction is N(6)-[(R)-lipoyl]-L-lysyl-[protein] + 3-methyl-2-oxobutanoate + H(+) = N(6)-[(R)-S(8)-2-methylpropanoyldihydrolipoyl]-L-lysyl-[protein] + CO2. Its function is as follows. The branched-chain alpha-keto dehydrogenase complex catalyzes the overall conversion of alpha-keto acids to acyl-CoA and CO(2). It contains multiple copies of three enzymatic components: branched-chain alpha-keto acid decarboxylase (E1), lipoamide acyltransferase (E2) and lipoamide dehydrogenase (E3). The chain is 2-oxoisovalerate dehydrogenase subunit beta from Thermus thermophilus (strain ATCC BAA-163 / DSM 7039 / HB27).